A 160-amino-acid polypeptide reads, in one-letter code: Cytochrome b6-f complex subunit 4 (160 aa).

The next 3 membrane-spanning stretches (helical) occupy residues 36–56 (LLYI…GLAV), 95–115 (LLGV…PFLE), and 131–151 (TVFL…TLPI).

Belongs to the cytochrome b family. PetD subfamily. In terms of assembly, the 4 large subunits of the cytochrome b6-f complex are cytochrome b6, subunit IV (17 kDa polypeptide, petD), cytochrome f and the Rieske protein, while the 4 small subunits are petG, petL, petM and petN. The complex functions as a dimer.

The protein resides in the plastid. Its subcellular location is the chloroplast thylakoid membrane. Component of the cytochrome b6-f complex, which mediates electron transfer between photosystem II (PSII) and photosystem I (PSI), cyclic electron flow around PSI, and state transitions. This Sorghum bicolor (Sorghum) protein is Cytochrome b6-f complex subunit 4.